A 97-amino-acid chain; its full sequence is Large ribosomal subunit protein eL21 (97 aa).

A disordered region spans residues 1–24 (MQKSEGFRSKTRYKLQKHPRQKGM). The segment covering 9 to 21 (SKTRYKLQKHPRQ) has biased composition (basic residues).

This sequence belongs to the eukaryotic ribosomal protein eL21 family.

The polypeptide is Large ribosomal subunit protein eL21 (Methanococcus maripaludis (strain DSM 14266 / JCM 13030 / NBRC 101832 / S2 / LL)).